Reading from the N-terminus, the 431-residue chain is Mitochondrial distribution and morphology protein 12 (431 aa).

In terms of domain architecture, SMP-LTD spans 1 to 431 (MSIDLNWETL…VYPSFWTFLV (431 aa)). 2 disordered regions span residues 68–153 (DFYE…GVST) and 209–289 (QSHT…PKPE). The segment covering 69–96 (FYEDLDDDDGGSDEDDEGSNSCQTDEEN) has biased composition (acidic residues). The segment covering 97 to 113 (EAAKTLRERRKMDRVER) has biased composition (basic and acidic residues). The span at 115 to 129 (ANGSSNVSNPPSYTD) shows a compositional bias: polar residues. Positions 241–252 (SASTLAVSSSTT) are enriched in low complexity.

It belongs to the MDM12 family. Component of the ER-mitochondria encounter structure (ERMES) or MDM complex, composed of mmm1, mdm10, mdm12 and mdm34. A mmm1 homodimer associates with one molecule of mdm12 on each side in a pairwise head-to-tail manner, and the SMP-LTD domains of mmm1 and mdm12 generate a continuous hydrophobic tunnel for phospholipid trafficking.

It localises to the mitochondrion outer membrane. The protein localises to the endoplasmic reticulum membrane. Component of the ERMES/MDM complex, which serves as a molecular tether to connect the endoplasmic reticulum (ER) and mitochondria. Components of this complex are involved in the control of mitochondrial shape and protein biogenesis, and function in nonvesicular lipid trafficking between the ER and mitochondria. Mdm12 is required for the interaction of the ER-resident membrane protein mmm1 and the outer mitochondrial membrane-resident beta-barrel protein mdm10. The mdm12-mmm1 subcomplex functions in the major beta-barrel assembly pathway that is responsible for biogenesis of all mitochondrial outer membrane beta-barrel proteins, and acts in a late step after the SAM complex. The mdm10-mdm12-mmm1 subcomplex further acts in the TOM40-specific pathway after the action of the mdm12-mmm1 complex. Essential for establishing and maintaining the structure of mitochondria and maintenance of mtDNA nucleoids. This is Mitochondrial distribution and morphology protein 12 from Sclerotinia sclerotiorum (strain ATCC 18683 / 1980 / Ss-1) (White mold).